Here is a 36-residue protein sequence, read N- to C-terminus: MRIVLVGPPGAGKGTQAAYLAQNLSIPHIATGDLFR.

10–15 (GAGKGT) contributes to the ATP binding site. Residues 30–36 (ATGDLFR) are NMP. Residues threonine 31 and arginine 36 each coordinate AMP.

This sequence belongs to the adenylate kinase family. In terms of assembly, monomer.

It localises to the cytoplasm. It catalyses the reaction AMP + ATP = 2 ADP. It functions in the pathway purine metabolism; AMP biosynthesis via salvage pathway; AMP from ADP: step 1/1. In terms of biological role, catalyzes the reversible transfer of the terminal phosphate group between ATP and AMP. Plays an important role in cellular energy homeostasis and in adenine nucleotide metabolism. In Streptomyces griseus, this protein is Adenylate kinase (adk).